Reading from the N-terminus, the 429-residue chain is Adenylosuccinate synthetase (429 aa).

GTP is bound by residues 12 to 18 and 40 to 42; these read GDEGKGK and GHT. Residue Asp-13 is the Proton acceptor of the active site. Positions 13 and 40 each coordinate Mg(2+). IMP contacts are provided by residues 13–16, 38–41, Thr-128, Arg-142, Gln-223, Thr-238, and Arg-302; these read DEGK and NAGH. Residue His-41 is the Proton donor of the active site. 298 to 304 lines the substrate pocket; that stretch reads VNTGRPR. Residues Arg-304, 330–332, and 412–414 each bind GTP; these read KLD and GVG.

It belongs to the adenylosuccinate synthetase family. In terms of assembly, homodimer. It depends on Mg(2+) as a cofactor.

Its subcellular location is the cytoplasm. The catalysed reaction is IMP + L-aspartate + GTP = N(6)-(1,2-dicarboxyethyl)-AMP + GDP + phosphate + 2 H(+). It functions in the pathway purine metabolism; AMP biosynthesis via de novo pathway; AMP from IMP: step 1/2. In terms of biological role, plays an important role in the de novo pathway of purine nucleotide biosynthesis. Catalyzes the first committed step in the biosynthesis of AMP from IMP. This Micrococcus luteus (strain ATCC 4698 / DSM 20030 / JCM 1464 / CCM 169 / CCUG 5858 / IAM 1056 / NBRC 3333 / NCIMB 9278 / NCTC 2665 / VKM Ac-2230) (Micrococcus lysodeikticus) protein is Adenylosuccinate synthetase.